We begin with the raw amino-acid sequence, 466 residues long: MNKIRTRYAPSPTGFLHIGGARTALFCYLFAKHFNGDFIFRLEDTDVKRNVEGGEASQLENLAWLGIIPDESPLKPNLKYGKYRQSEKLDRYKEVLDMLLEKNLAYKAYDLPEELEAQKLESEQKGFASFRYDPSWLKISDEEKAKRDLNNQFSYRIRMPKDKVFSWNDLVRGEISFSSNEISDWVIFKSDNYPTYNFAVVVDDHDMQISHVLRGEEHIGNTPKQLALYDYLNWSSPQYGHLTIITDMGGKKLSKRDLSLKQFIEDYKNEGYIPHAIFNFLALLGWTSEDAKEVMSKKELISKFNPARLSKSPSKFDVNKMSWFSKIYMKNQSNEEVQSHLDFKDFNSNSSWKEIFTSTFKESATTYLELQKALNNYLNPMSSELVLNEEELKVVKEFKANLKSFTVEEIQAAINLTASNLKLKGKALFMPIRKACTYLEHGPELAKAIYLFGEKLITERLAKYEN.

A 'HIGH' region motif is present at residues 10-20 (PSPTGFLHIGG). Positions 252-256 (KLSKR) match the 'KMSKS' region motif. Position 255 (Lys255) interacts with ATP.

Belongs to the class-I aminoacyl-tRNA synthetase family. Glutamate--tRNA ligase type 1 subfamily. As to quaternary structure, monomer.

It is found in the cytoplasm. The catalysed reaction is tRNA(Glu) + L-glutamate + ATP = L-glutamyl-tRNA(Glu) + AMP + diphosphate. Its function is as follows. Catalyzes the attachment of glutamate to tRNA(Glu) in a two-step reaction: glutamate is first activated by ATP to form Glu-AMP and then transferred to the acceptor end of tRNA(Glu). The sequence is that of Glutamate--tRNA ligase from Mycoplasmopsis synoviae (strain 53) (Mycoplasma synoviae).